The sequence spans 694 residues: Soluble starch synthase 2-2, chloroplastic/amyloplastic (694 aa).

The transit peptide at 1–15 (MSGAIASSPAATLFL) directs the protein to the chloroplast. The disordered stretch occupies residues 93 to 197 (KADHVEDSVS…DSENKESGPL (105 aa)). Over residues 127–142 (APVSKPKVDPSVPASK) the composition is skewed to low complexity. Positions 156 to 176 (AALDKKEDVGVAEPLEAKADA) are enriched in basic and acidic residues. The span at 177–186 (GGDAGAVSSA) shows a compositional bias: low complexity. ADP-alpha-D-glucose is bound at residue Lys217.

It belongs to the glycosyltransferase 1 family. Bacterial/plant glycogen synthase subfamily. Expressed in leaves and weakly in endosperm and roots.

Its subcellular location is the plastid. It localises to the amyloplast. The protein localises to the chloroplast. The enzyme catalyses [(1-&gt;4)-alpha-D-glucosyl](n) + ADP-alpha-D-glucose = [(1-&gt;4)-alpha-D-glucosyl](n+1) + ADP + H(+). Its pathway is glycan biosynthesis; starch biosynthesis. Functionally, may contribute to the deposition of transient starch in chloroplasts of leaves. This Oryza sativa subsp. japonica (Rice) protein is Soluble starch synthase 2-2, chloroplastic/amyloplastic (SSII-2).